Reading from the N-terminus, the 288-residue chain is Fructose-bisphosphate aldolase (288 aa).

Ser49 provides a ligand contact to D-glyceraldehyde 3-phosphate. Asp84 serves as the catalytic Proton donor. Positions 85, 105, 135, and 177 each coordinate Zn(2+). A dihydroxyacetone phosphate-binding site is contributed by Gly178. His206 contributes to the Zn(2+) binding site. Dihydroxyacetone phosphate-binding positions include 207–209 (GGS) and 228–231 (NINT).

Belongs to the class II fructose-bisphosphate aldolase family. Homodimer. Zn(2+) is required as a cofactor.

The catalysed reaction is beta-D-fructose 1,6-bisphosphate = D-glyceraldehyde 3-phosphate + dihydroxyacetone phosphate. The protein operates within carbohydrate degradation; glycolysis; D-glyceraldehyde 3-phosphate and glycerone phosphate from D-glucose: step 4/4. Functionally, catalyzes the aldol condensation of dihydroxyacetone phosphate (DHAP or glycerone-phosphate) with glyceraldehyde 3-phosphate (G3P) to form fructose 1,6-bisphosphate (FBP) in gluconeogenesis and the reverse reaction in glycolysis. The polypeptide is Fructose-bisphosphate aldolase (fba) (Mycoplasma genitalium (strain ATCC 33530 / DSM 19775 / NCTC 10195 / G37) (Mycoplasmoides genitalium)).